A 322-amino-acid chain; its full sequence is Serine protease Lpg1137 (322 aa).

The active site involves S68.

It is found in the secreted. It localises to the host mitochondrion membrane. Functionally, serine protease effector that inhibits host cell autophagy by targeting SNX17. Localizes to the host endoplasmic reticulum-mitochondria contact site and catalyzes degradation of host SNX17, thereby impairing endoplasmic reticulum-mitochondria communication, leading to inhibit autophagy as well as staurosporine-induced apoptosis. The chain is Serine protease Lpg1137 from Legionella pneumophila subsp. pneumophila (strain Philadelphia 1 / ATCC 33152 / DSM 7513).